The sequence spans 273 residues: Energy-coupling factor transporter ATP-binding protein EcfA (273 aa).

In terms of domain architecture, ABC transporter spans 2–237; that stretch reads ISIRDLTYFY…RASLLALGLA (236 aa). Position 36 to 43 (36 to 43) interacts with ATP; sequence GRNGSGKS.

It belongs to the ABC transporter superfamily. Energy-coupling factor EcfA family. Forms a stable energy-coupling factor (ECF) transporter complex composed of 2 membrane-embedded substrate-binding proteins (S component), 2 ATP-binding proteins (A component) and 2 transmembrane proteins (T component).

The protein localises to the cell membrane. ATP-binding (A) component of a common energy-coupling factor (ECF) ABC-transporter complex. Unlike classic ABC transporters this ECF transporter provides the energy necessary to transport a number of different substrates. This is Energy-coupling factor transporter ATP-binding protein EcfA from Syntrophomonas wolfei subsp. wolfei (strain DSM 2245B / Goettingen).